Here is a 604-residue protein sequence, read N- to C-terminus: Prostaglandin G/H synthase 2 (604 aa).

A signal peptide spans 1–17 (MLARALLLCAVLALSHT). Residues 18–55 (ANPCCSHPCQNRGVCMSVGFDQYKCDCTRTGFYGENCS) enclose the EGF-like domain. Intrachain disulfides connect Cys-21–Cys-32, Cys-22–Cys-145, Cys-26–Cys-42, and Cys-44–Cys-54. The N-linked (GlcNAc...) asparagine glycan is linked to Asn-53. Arg-106 lines the substrate pocket. N-linked (GlcNAc...) asparagine glycosylation is present at Asn-130. His-193 (proton acceptor) is an active-site residue. Tyr-341 is a substrate binding site. The active-site For cyclooxygenase activity is Tyr-371. Residue His-374 participates in heme b binding. N-linked (GlcNAc...) asparagine glycosylation occurs at Asn-396. Cys-526 is subject to S-nitrosocysteine. Cys-555 and Cys-561 are oxidised to a cystine. Ser-565 is subject to O-acetylserine. N-linked (GlcNAc...) asparagine glycosylation occurs at Asn-580.

It belongs to the prostaglandin G/H synthase family. In terms of assembly, homodimer. It depends on heme b as a cofactor. S-nitrosylation by NOS2 (iNOS) activates enzyme activity. S-nitrosylation may take place on different Cys residues in addition to Cys-526. Post-translationally, acetylated at Ser-565 by SPHK1. During neuroinflammation, acetylation by SPHK1 promotes neuronal secretion of specialized preresolving mediators (SPMs), especially 15-R-lipoxin A4, which results in an increase of phagocytic microglia.

The protein localises to the microsome membrane. The protein resides in the endoplasmic reticulum membrane. Its subcellular location is the nucleus inner membrane. It localises to the nucleus outer membrane. The catalysed reaction is (5Z,8Z,11Z,14Z)-eicosatetraenoate + AH2 + 2 O2 = prostaglandin H2 + A + H2O. The enzyme catalyses (5Z,8Z,11Z,14Z)-eicosatetraenoate + 2 O2 = prostaglandin G2. It catalyses the reaction prostaglandin G2 + AH2 = prostaglandin H2 + A + H2O. It carries out the reaction (5Z,8Z,11Z,14Z,17Z)-eicosapentaenoate + 2 O2 = prostaglandin G3. The catalysed reaction is prostaglandin G3 + AH2 = prostaglandin H3 + A + H2O. The enzyme catalyses (8Z,11Z,14Z)-eicosatrienoate + 2 O2 = prostaglandin G1. It catalyses the reaction prostaglandin G1 + AH2 = prostaglandin H1 + A + H2O. It carries out the reaction 2-(5Z,8Z,11Z,14Z)-eicosatetraenoyl-sn-glycero-3-phosphoethanolamine + 2 O2 = 2-(prostaglandin G2)-sn-glycero-3-phosphoethanolamine. The catalysed reaction is 2-(prostaglandin G2)-sn-glycero-3-phosphoethanolamine + AH2 = 2-(prostaglandin H2)-sn-glycero-3-phosphoethanolamine + A + H2O. The enzyme catalyses 2-(5Z,8Z,11Z,14Z)-eicosatetraenoyl-sn-glycero-3-phosphocholine + 2 O2 = 2-(prostaglandin G2)-sn-glycero-3-phosphocholine. It catalyses the reaction 2-(prostaglandin G2)-sn-glycero-3-phosphocholine + AH2 = 2-(prostaglandin H2)-sn-glycero-3-phosphocholine + A + H2O. It carries out the reaction (15S)-hydroperoxy-(5Z,8Z,11Z,13E)-eicosatetraenoate + AH2 = (15S)-hydroxy-(5Z,8Z,11Z,13E)-eicosatetraenoate + A + H2O. The catalysed reaction is 2-(5Z,8Z,11Z,14Z)-eicosatetraenoyl-sn-glycero-3-phosphocholine + AH2 + O2 = 2-[(15S)-hydroxy-(5Z,8Z,11Z,13E)-eicosatetraenoyl]-sn-glycero-3-phosphocholine + A + H2O. The enzyme catalyses 2-(5Z,8Z,11Z,14Z)-eicosatetraenoyl-sn-glycero-3-phosphocholine + AH2 + O2 = 2-[(15R)-hydroxy-(5Z,8Z,11Z,13E)-eicosatetraenoyl]-sn-glycero-3-phosphocholine + A + H2O. It catalyses the reaction 2-(5Z,8Z,11Z,14Z)-eicosatetraenoyl-sn-glycero-3-phosphocholine + AH2 + O2 = 2-[(11R)-hydroxy-(5Z,8Z,12E,14Z)-eicosatetraenoyl]-sn-glycero-3-phosphocholine + A + H2O. It carries out the reaction (9Z,12Z)-octadecadienoate + AH2 + O2 = 9-hydroxy-(10E,12Z)-octadecadienoate + A + H2O. The catalysed reaction is (9Z,12Z)-octadecadienoate + AH2 + O2 = 13-hydroxy-(9Z,11E)-octadecadienoate + A + H2O. The enzyme catalyses (5Z,8Z,11Z,14Z)-eicosatetraenoate + AH2 + O2 = (15R)-hydroxy-(5Z,8Z,11Z,13E)-eicosatetraenoate + A + H2O. It catalyses the reaction (5Z,8Z,11Z,14Z)-eicosatetraenoate + AH2 + O2 = (11R)-hydroxy-(5Z,8Z,12E,14Z)-eicosatetraenoate + A + H2O. It carries out the reaction (5Z,8Z,11Z,14Z,17Z)-eicosapentaenoate + AH2 + O2 = (11R)-hydroxy-(5Z,8Z,12E,14Z,17Z)-eicosapentaenoate + A + H2O. The catalysed reaction is (5Z,8Z,11Z,14Z,17Z)-eicosapentaenoate + AH2 + O2 = (18S)-hydroxy-(5Z,8Z,11Z,14Z,16E)-eicosapentaenoate + A + H2O. The enzyme catalyses (5Z,8Z,11Z,14Z,17Z)-eicosapentaenoate + AH2 + O2 = (18R)-hydroxy-(5Z,8Z,11Z,14Z,16E)-eicosapentaenoate + A + H2O. It catalyses the reaction (5Z,8Z,11Z,14Z,17Z)-eicosapentaenoate + AH2 + O2 = (15R)-hydroxy-(5Z,8Z,11Z,13E,17Z)-eicosapentaenoate + A + H2O. It carries out the reaction (5Z,8Z,11Z,14Z,17Z)-eicosapentaenoate + AH2 + O2 = (15S)-hydroxy-(5Z,8Z,11Z,13E,17Z)-eicosapentaenoate + A + H2O. The catalysed reaction is (7Z,10Z,13Z,16Z,19Z)-docosapentaenoate + AH2 + O2 = 13R-hydroxy-(7Z,10Z,14E,16Z,19Z)-docosapentaenoate + A + H2O. The enzyme catalyses (4Z,7Z,10Z,13Z,16Z,19Z)-docosahexaenoate + AH2 + O2 = 13-hydroxy-(4Z,7Z,10Z,14E,16Z,19Z)-docosahexaenoate + A + H2O. It catalyses the reaction (5S)-hydroxy-(6E,8Z,11Z,14Z)-eicosatetraenoate + AH2 + O2 = (5S,15R)-dihydroxy-(6E,8Z,11Z,13E)-eicosatetraenoate + A + H2O. It carries out the reaction (4Z,7Z,10Z,13Z,16Z,19Z)-docosahexaenoate + AH2 + O2 = 17R-hydroxy-(4Z,7Z,10Z,13Z,15E,19Z)-docosahexaenoate + A + H2O. The catalysed reaction is (5S)-hydroxy-(6E,8Z,11Z,14Z)-eicosatetraenoate + AH2 + O2 = (5S,15S)-dihydroxy-(6E,8Z,11Z,13E)-eicosatetraenoate + A + H2O. The enzyme catalyses (5S)-hydroxy-(6E,8Z,11Z,14Z)-eicosatetraenoate + AH2 + O2 = (5S,11R)-dihydroxy-(6E,8Z,12E,14Z)-eicosatetraenoate + A + H2O. It catalyses the reaction 2-(5Z,8Z,11Z,14Z-eicosatetraenoyl)-glycerol + 2 O2 = 2-glyceryl-prostaglandin G2. It carries out the reaction 2-glyceryl-prostaglandin G2 + AH2 = 2-glyceryl-prostaglandin H2 + A + H2O. The catalysed reaction is (5Z,8Z,11Z,14Z)-eicosatetraenoate + O2 = (15R)-hydroperoxy-(5Z,8Z,11Z,13E)-eicosatetraenoate. The enzyme catalyses (5Z,8Z,11Z,14Z)-eicosatetraenoate + O2 = 11R-hydroperoxy-(5Z,8Z,12E,14Z)-eicosatetraenoate. It catalyses the reaction (9Z,12Z)-octadecadienoate + AH2 + O2 = (9R)-hydroxy-(10E,12Z)-octadecadienoate + A + H2O. It carries out the reaction (9Z,12Z)-octadecadienoate + AH2 + O2 = (9S)-hydroxy-(10E,12Z)-octadecadienoate + A + H2O. The catalysed reaction is (9Z,12Z)-octadecadienoate + AH2 + O2 = (13S)-hydroxy-(9Z,11E)-octadecadienoate + A + H2O. The enzyme catalyses (9Z,12Z)-octadecadienoate + AH2 + O2 = (13R)-hydroxy-(9Z,11E)-octadecadienoate + A + H2O. It participates in lipid metabolism; prostaglandin biosynthesis. The cyclooxygenase activity is inhibited by nonsteroidal anti-inflammatory drugs (NSAIDs) including aspirin, ibuprofen, flurbiprofen, celecoxib, flufenamic, mefenamic and tolfenamic acids as well as by hydroperoxide scavenger erythrocyte glutathione peroxidase GPX1. Aspirin triggers enzyme acetylation turning off its ability to generate pro-inflammatory prostaglandins, but switches on its capacity to produce anti-inflammatory lipid mediators involved in inflammation resolution. Aspirin enhances lipoxygenase-type activity toward production of epimers with R stereochemistry such as 15R-HETE, 18R-HEPE, 15R-HEPE and 17R-HDHA. Atorvastatin, a cholesterol-lowering drug, triggers enzyme S-nitrosylation increasing production of 13-series resolvins (RvTs). Dual cyclooxygenase and peroxidase in the biosynthesis pathway of prostanoids, a class of C20 oxylipins mainly derived from arachidonate ((5Z,8Z,11Z,14Z)-eicosatetraenoate, AA, C20:4(n-6)), with a particular role in the inflammatory response. The cyclooxygenase activity oxygenates AA to the hydroperoxy endoperoxide prostaglandin G2 (PGG2), and the peroxidase activity reduces PGG2 to the hydroxy endoperoxide prostaglandin H2 (PGH2), the precursor of all 2-series prostaglandins and thromboxanes. This complex transformation is initiated by abstraction of hydrogen at carbon 13 (with S-stereochemistry), followed by insertion of molecular O2 to form the endoperoxide bridge between carbon 9 and 11 that defines prostaglandins. The insertion of a second molecule of O2 (bis-oxygenase activity) yields a hydroperoxy group in PGG2 that is then reduced to PGH2 by two electrons. Similarly catalyzes successive cyclooxygenation and peroxidation of dihomo-gamma-linoleate (DGLA, C20:3(n-6)) and eicosapentaenoate (EPA, C20:5(n-3)) to corresponding PGH1 and PGH3, the precursors of 1- and 3-series prostaglandins. In an alternative pathway of prostanoid biosynthesis, converts 2-arachidonoyl lysophopholipids to prostanoid lysophopholipids, which are then hydrolyzed by intracellular phospholipases to release free prostanoids. Metabolizes 2-arachidonoyl glycerol yielding the glyceryl ester of PGH2, a process that can contribute to pain response. Generates lipid mediators from n-3 and n-6 polyunsaturated fatty acids (PUFAs) via a lipoxygenase-type mechanism. Oxygenates PUFAs to hydroperoxy compounds and then reduces them to corresponding alcohols. Plays a role in the generation of resolution phase interaction products (resolvins) during both sterile and infectious inflammation. Metabolizes docosahexaenoate (DHA, C22:6(n-3)) to 17R-HDHA, a precursor of the D-series resolvins (RvDs). As a component of the biosynthetic pathway of E-series resolvins (RvEs), converts eicosapentaenoate (EPA, C20:5(n-3)) primarily to 18S-HEPE that is further metabolized by ALOX5 and LTA4H to generate 18S-RvE1 and 18S-RvE2. In vascular endothelial cells, converts docosapentaenoate (DPA, C22:5(n-3)) to 13R-HDPA, a precursor for 13-series resolvins (RvTs) shown to activate macrophage phagocytosis during bacterial infection. In activated leukocytes, contributes to oxygenation of hydroxyeicosatetraenoates (HETE) to diHETES (5,15-diHETE and 5,11-diHETE). Can also use linoleate (LA, (9Z,12Z)-octadecadienoate, C18:2(n-6)) as substrate and produce hydroxyoctadecadienoates (HODEs) in a regio- and stereospecific manner, being (9R)-HODE ((9R)-hydroxy-(10E,12Z)-octadecadienoate) and (13S)-HODE ((13S)-hydroxy-(9Z,11E)-octadecadienoate) its major products. During neuroinflammation, plays a role in neuronal secretion of specialized preresolving mediators (SPMs) 15R-lipoxin A4 that regulates phagocytic microglia. The protein is Prostaglandin G/H synthase 2 of Homo sapiens (Human).